Here is a 367-residue protein sequence, read N- to C-terminus: 2-aminoethylphosphonate--pyruvate transaminase (367 aa).

Residue Lys194 is modified to N6-(pyridoxal phosphate)lysine.

It belongs to the class-V pyridoxal-phosphate-dependent aminotransferase family. PhnW subfamily. Homodimer. Requires pyridoxal 5'-phosphate as cofactor.

It carries out the reaction (2-aminoethyl)phosphonate + pyruvate = phosphonoacetaldehyde + L-alanine. Its function is as follows. Involved in phosphonate degradation. This is 2-aminoethylphosphonate--pyruvate transaminase from Salmonella agona (strain SL483).